The following is a 100-amino-acid chain: Integration host factor subunit alpha (100 aa).

It belongs to the bacterial histone-like protein family. In terms of assembly, heterodimer of an alpha and a beta chain.

Its function is as follows. This protein is one of the two subunits of integration host factor, a specific DNA-binding protein that functions in genetic recombination as well as in transcriptional and translational control. In Caulobacter vibrioides (strain ATCC 19089 / CIP 103742 / CB 15) (Caulobacter crescentus), this protein is Integration host factor subunit alpha.